Here is a 501-residue protein sequence, read N- to C-terminus: Mitogen-activated protein kinase 16 (501 aa).

One can recognise a Protein kinase domain in the interval 22 to 313 (YEVTEVVGKG…AAEALTDPYF (292 aa)). Residues 28–36 (VGKGSYGVV) and K51 contribute to the ATP site. D148 acts as the Proton acceptor in catalysis. T184 bears the Phosphothreonine mark. Positions 184–186 (TDY) match the TXY motif. Y186 carries the post-translational modification Phosphotyrosine. The segment at 477–501 (DEESMSEYMNEAADGVPHKIAQLKT) is disordered.

It belongs to the protein kinase superfamily. CMGC Ser/Thr protein kinase family. MAP kinase subfamily. Post-translationally, dually phosphorylated on Thr-184 and Tyr-186, which activates the enzyme.

It catalyses the reaction L-seryl-[protein] + ATP = O-phospho-L-seryl-[protein] + ADP + H(+). The enzyme catalyses L-threonyl-[protein] + ATP = O-phospho-L-threonyl-[protein] + ADP + H(+). Its activity is regulated as follows. Activated by threonine and tyrosine phosphorylation. This Oryza sativa subsp. japonica (Rice) protein is Mitogen-activated protein kinase 16 (MPK16).